Reading from the N-terminus, the 430-residue chain is 3-phosphoshikimate 1-carboxyvinyltransferase (430 aa).

3-phosphoshikimate is bound by residues Lys-23, Ser-24, and Arg-28. Residue Lys-23 coordinates phosphoenolpyruvate. The phosphoenolpyruvate site is built by Gly-95 and Arg-123. Positions 169, 171, 315, and 342 each coordinate 3-phosphoshikimate. Gln-171 is a phosphoenolpyruvate binding site. Catalysis depends on Asp-315, which acts as the Proton acceptor. Phosphoenolpyruvate is bound by residues Arg-346 and Arg-388.

Belongs to the EPSP synthase family. Monomer.

It is found in the cytoplasm. It carries out the reaction 3-phosphoshikimate + phosphoenolpyruvate = 5-O-(1-carboxyvinyl)-3-phosphoshikimate + phosphate. Its pathway is metabolic intermediate biosynthesis; chorismate biosynthesis; chorismate from D-erythrose 4-phosphate and phosphoenolpyruvate: step 6/7. Catalyzes the transfer of the enolpyruvyl moiety of phosphoenolpyruvate (PEP) to the 5-hydroxyl of shikimate-3-phosphate (S3P) to produce enolpyruvyl shikimate-3-phosphate and inorganic phosphate. The polypeptide is 3-phosphoshikimate 1-carboxyvinyltransferase (Streptococcus pyogenes serotype M3 (strain ATCC BAA-595 / MGAS315)).